The chain runs to 298 residues: Probable D,D-dipeptide transport system permease protein DdpC (298 aa).

The Cytoplasmic portion of the chain corresponds to 1-33 (MMLSEETSAVRPQKQTRFNGAKLVWMLKGSPLT). A helical transmembrane segment spans residues 34–54 (VTSAVIIVLMLLMMIFSPWLA). Residues 55–96 (THDPNAIDLTARLLPPSAAHWFGTDEVGRDLFSRVLVGSQQS) lie on the Periplasmic side of the membrane. Residues 97-117 (ILAGLVVVAIAGMIGSLLGCL) form a helical membrane-spanning segment. The 186-residue stretch at 97 to 282 (ILAGLVVVAI…LTAVGFNLFG (186 aa)) folds into the ABC transmembrane type-1 domain. Residues 118–124 (SGVLGGR) are Cytoplasmic-facing. 2 helical membrane-spanning segments follow: residues 125 to 145 (ADAI…LVLT) and 146 to 166 (MALA…IAIV). Residues 167 to 217 (RIPFYVRLARGQALVVRQYTYVQAAKTFGASRWHLINWHILRNSLPPLIVQ) are Cytoplasmic-facing. A helical transmembrane segment spans residues 218 to 238 (ASLDIGSAILMAATLGFIGLG). At 239–260 (AQQPSAEWGAMVANGRNYVLDQ) the chain is on the periplasmic side. Residues 261-281 (WWYCAFPGAAILLTAVGFNLF) form a helical membrane-spanning segment. At 282-298 (GDGIRDLLDPKAGGKQS) the chain is on the cytoplasmic side.

The protein belongs to the binding-protein-dependent transport system permease family. OppBC subfamily. As to quaternary structure, the complex is composed of two ATP-binding proteins (DdpD and DdpF), two transmembrane proteins (DdpB and DdpC) and a solute-binding protein (DdpA).

The protein localises to the cell inner membrane. In terms of biological role, part of the ABC transporter complex DdpABCDF, which is probably involved in D,D-dipeptide transport. Probably responsible for the translocation of the substrate across the membrane. This Escherichia coli (strain K12) protein is Probable D,D-dipeptide transport system permease protein DdpC (ddpC).